Here is a 760-residue protein sequence, read N- to C-terminus: Catecholate siderophore receptor Fiu (760 aa).

The N-terminal stretch at 1–31 is a signal peptide; sequence MENNRNFPARQFHSLTFFAGLCIGITPVAQA. Positions 67 to 175 constitute a TBDR plug domain; sequence PVADTTRTMT…PTGSINMISK (109 aa). The 581-residue stretch at 180–760 folds into the TBDR beta-barrel domain; that stretch reads DSGIDASASI…TFLLTANMHF (581 aa). The TonB C-terminal box motif lies at 743–760; it reads RYHPGEPRTFLLTANMHF.

This sequence belongs to the TonB-dependent receptor family.

It localises to the cell outer membrane. In terms of biological role, involved in the active transport across the outer membrane of iron complexed with catecholate siderophores such as dihydroxybenzoylserine and dihydroxybenzoate. It derives its energy for transport by interacting with the trans-periplasmic membrane protein TonB. Can also transport catechol-substituted cephalosporins. Receptor for microcins M, H47 and E492. This Escherichia coli (strain UTI89 / UPEC) protein is Catecholate siderophore receptor Fiu (fiu).